Reading from the N-terminus, the 1091-residue chain is Voltage-dependent calcium channel subunit alpha-2/delta-3 (1091 aa).

Positions 1 to 33 (MAGPGSLCCASRGASALLATALLYAALGDVVRS) are cleaved as a signal peptide. At 34-1068 (EQQIPLSVVK…HPEENARECG (1035 aa)) the chain is on the extracellular side. The N-linked (GlcNAc...) asparagine glycan is linked to N166. One can recognise a VWFA domain in the interval 256–438 (DVVILVDVSG…ENVMEYLHVL (183 aa)). 3 residues coordinate a divalent metal cation: D262, S264, and S266. Positions 262-266 (DVSGS) match the MIDAS-like motif motif. N-linked (GlcNAc...) asparagine glycosylation is present at N309. An intrachain disulfide couples C412 to C1055. The Cache domain occupies 452 to 549 (WTEAYIDSTL…RPLYEEGKKR (98 aa)). 2 N-linked (GlcNAc...) asparagine glycosylation sites follow: N553 and N632. A Phosphotyrosine modification is found at Y924. The helical transmembrane segment at 1069 to 1089 (GASSLQAQAALLLLPLVSSLF) threads the bilayer. The Cytoplasmic segment spans residues 1090 to 1091 (SR).

This sequence belongs to the calcium channel subunit alpha-2/delta family. As to quaternary structure, dimer formed of alpha-2-2 and delta-2 chains; disulfide-linked. Voltage-dependent calcium channels are multisubunit complexes, consisting of alpha-1 (CACNA1), alpha-2 (CACNA2D), beta (CACNB) and delta (CACNA2D) subunits in a 1:1:1:1 ratio. In terms of processing, N-glycosylated. May be proteolytically processed into subunits alpha-2-3 and delta-3 that are disulfide-linked. It is however unclear whether such cleavage really takes place in vivo and has a functional role. Brain-specific. Predominantly expressed in the caudate putamen, entorhinal complex, hippocampus and cortex.

It localises to the membrane. In terms of biological role, the alpha-2/delta subunit of voltage-dependent calcium channels regulates calcium current density and activation/inactivation kinetics of the calcium channel. Acts as a regulatory subunit for P/Q-type calcium channel (CACNA1A), N-type (CACNA1B), L-type (CACNA1C OR CACNA1D) but not T-type (CACNA1G). The sequence is that of Voltage-dependent calcium channel subunit alpha-2/delta-3 (Cacna2d3) from Mus musculus (Mouse).